A 375-amino-acid chain; its full sequence is MTTEKINLLDFDRKGMRQFFAEELGEKAFRADQVMKWIYHFGVDDFDNMTNINKKLREKLQHKCEIKAPTVAEAQHSSDGTIKWAMKVGDQDVETVYIPEEDRATLCVSSQVGCALECKFCSTAQQGFNRNLKVSEIIGQVWRAAREIGLQKETGRRPITNVVMMGMGEPLLNMKNLIPALEIMLDDLGFGLSKRRVTVSTSGVVSGLDQMTGKIDVALAISLHAPNDKLRSEIMPINDRWDIQDFLASVRRYIASSNANRGKVTVEYVLLDHVNDDMGHARELAELMKDTPCKINLIPFNPYPGSPYKKPSNSRIDRFQKTLMQYEHTVTVRKTRGDDIDAACGQLVGDVIDRTKRTAALKAARGAETIDVKAV.

The active-site Proton acceptor is the E94. The Radical SAM core domain maps to 100–339; sequence EEDRATLCVS…VTVRKTRGDD (240 aa). Cysteines 107 and 344 form a disulfide. C114, C118, and C121 together coordinate [4Fe-4S] cluster. Residues 168-169, S200, 222-224, and N301 each bind S-adenosyl-L-methionine; these read GE and SLH. Residue C344 is the S-methylcysteine intermediate of the active site.

This sequence belongs to the radical SAM superfamily. RlmN family. [4Fe-4S] cluster serves as cofactor.

Its subcellular location is the cytoplasm. It carries out the reaction adenosine(2503) in 23S rRNA + 2 reduced [2Fe-2S]-[ferredoxin] + 2 S-adenosyl-L-methionine = 2-methyladenosine(2503) in 23S rRNA + 5'-deoxyadenosine + L-methionine + 2 oxidized [2Fe-2S]-[ferredoxin] + S-adenosyl-L-homocysteine. It catalyses the reaction adenosine(37) in tRNA + 2 reduced [2Fe-2S]-[ferredoxin] + 2 S-adenosyl-L-methionine = 2-methyladenosine(37) in tRNA + 5'-deoxyadenosine + L-methionine + 2 oxidized [2Fe-2S]-[ferredoxin] + S-adenosyl-L-homocysteine. In terms of biological role, specifically methylates position 2 of adenine 2503 in 23S rRNA and position 2 of adenine 37 in tRNAs. m2A2503 modification seems to play a crucial role in the proofreading step occurring at the peptidyl transferase center and thus would serve to optimize ribosomal fidelity. The polypeptide is Dual-specificity RNA methyltransferase RlmN (Vibrio parahaemolyticus serotype O3:K6 (strain RIMD 2210633)).